Reading from the N-terminus, the 228-residue chain is 30 kDa heat shock protein (228 aa).

3 disordered regions span residues 34–53 (EVQG…PTRT), 117–136 (KGEP…DVDE), and 144–174 (TATG…APAE). Positions 49 to 228 (QPTRTFSPKF…KHETIRIAIN (180 aa)) constitute a sHSP domain. A compositionally biased stretch (low complexity) spans 144–158 (TATGANNQNNQQVAQ).

It belongs to the small heat shock protein (HSP20) family.

The protein localises to the cytoplasm. This Neurospora crassa (strain ATCC 24698 / 74-OR23-1A / CBS 708.71 / DSM 1257 / FGSC 987) protein is 30 kDa heat shock protein (hsp30).